Here is a 119-residue protein sequence, read N- to C-terminus: Large ribosomal subunit protein bL20 (119 aa).

Belongs to the bacterial ribosomal protein bL20 family.

Binds directly to 23S ribosomal RNA and is necessary for the in vitro assembly process of the 50S ribosomal subunit. It is not involved in the protein synthesizing functions of that subunit. This is Large ribosomal subunit protein bL20 from Albidiferax ferrireducens (strain ATCC BAA-621 / DSM 15236 / T118) (Rhodoferax ferrireducens).